Reading from the N-terminus, the 543-residue chain is CTP synthase (543 aa).

An amidoligase domain region spans residues 1–266 (MTKFIFVTGG…DDIICERFGI (266 aa)). Residue Ser-13 coordinates CTP. Ser-13 lines the UTP pocket. ATP is bound by residues 14 to 19 (SLGKGI) and Asp-71. Residues Asp-71 and Glu-140 each contribute to the Mg(2+) site. CTP is bound by residues 147–149 (DIE), 187–192 (KTKPTQ), and Lys-223. Residues 187–192 (KTKPTQ) and Lys-223 each bind UTP. Residues 291-543 (TVAIVGKYVE…VKAAIDHQNI (253 aa)) enclose the Glutamine amidotransferase type-1 domain. Gly-354 serves as a coordination point for L-glutamine. Catalysis depends on Cys-381, which acts as the Nucleophile; for glutamine hydrolysis. L-glutamine is bound by residues 382-385 (LGMQ), Glu-404, and Arg-471. Residues His-516 and Glu-518 contribute to the active site.

This sequence belongs to the CTP synthase family. Homotetramer.

It carries out the reaction UTP + L-glutamine + ATP + H2O = CTP + L-glutamate + ADP + phosphate + 2 H(+). The enzyme catalyses L-glutamine + H2O = L-glutamate + NH4(+). The catalysed reaction is UTP + NH4(+) + ATP = CTP + ADP + phosphate + 2 H(+). Its pathway is pyrimidine metabolism; CTP biosynthesis via de novo pathway; CTP from UDP: step 2/2. Allosterically activated by GTP, when glutamine is the substrate; GTP has no effect on the reaction when ammonia is the substrate. The allosteric effector GTP functions by stabilizing the protein conformation that binds the tetrahedral intermediate(s) formed during glutamine hydrolysis. Inhibited by the product CTP, via allosteric rather than competitive inhibition. Its function is as follows. Catalyzes the ATP-dependent amination of UTP to CTP with either L-glutamine or ammonia as the source of nitrogen. Regulates intracellular CTP levels through interactions with the four ribonucleotide triphosphates. The chain is CTP synthase from Psychrobacter sp. (strain PRwf-1).